Reading from the N-terminus, the 37-residue chain is Large ribosomal subunit protein bL36 (37 aa).

This sequence belongs to the bacterial ribosomal protein bL36 family.

This is Large ribosomal subunit protein bL36 from Rhodococcus erythropolis (strain PR4 / NBRC 100887).